Here is a 30-residue protein sequence, read N- to C-terminus: Rothein 3.3 (30 aa).

At leucine 30 the chain carries Leucine amide.

Expressed by the skin dorsal glands.

The protein resides in the secreted. Its function is as follows. Lacks antimicrobial activity. Does not inhibit the formation of NO by neuronal nitric oxide. The sequence is that of Rothein 3.3 from Litoria rothii (Roth's tree frog).